A 260-amino-acid polypeptide reads, in one-letter code: Putative ATP-binding protein BruAb2_1123 (260 aa).

One can recognise an ABC transporter domain in the interval 5–228; sequence ISFNNVVMRY…DLPYPRTEAI (224 aa). An ATP-binding site is contributed by 37–44; it reads GPSGCGKS.

It belongs to the ABC transporter superfamily. As to quaternary structure, the complex is composed of two ATP-binding proteins (BruAb2_1123), two transmembrane proteins (BruAb2_1124) and a solute-binding protein (BruAb2_1122).

The protein localises to the cell inner membrane. Probably part of an ABC transporter complex. Probably Responsible for energy coupling to the transport system. The sequence is that of Putative ATP-binding protein BruAb2_1123 from Brucella abortus biovar 1 (strain 9-941).